A 631-amino-acid chain; its full sequence is 1-deoxy-D-xylulose-5-phosphate synthase (631 aa).

Thiamine diphosphate-binding positions include H73 and 114-116 (GHS). D145 is a Mg(2+) binding site. Thiamine diphosphate is bound by residues 146–147 (GA), N174, Y285, and E366. A Mg(2+)-binding site is contributed by N174.

Belongs to the transketolase family. DXPS subfamily. Homodimer. It depends on Mg(2+) as a cofactor. Requires thiamine diphosphate as cofactor.

The catalysed reaction is D-glyceraldehyde 3-phosphate + pyruvate + H(+) = 1-deoxy-D-xylulose 5-phosphate + CO2. It functions in the pathway metabolic intermediate biosynthesis; 1-deoxy-D-xylulose 5-phosphate biosynthesis; 1-deoxy-D-xylulose 5-phosphate from D-glyceraldehyde 3-phosphate and pyruvate: step 1/1. Functionally, catalyzes the acyloin condensation reaction between C atoms 2 and 3 of pyruvate and glyceraldehyde 3-phosphate to yield 1-deoxy-D-xylulose-5-phosphate (DXP). In Desulfitobacterium hafniense (strain Y51), this protein is 1-deoxy-D-xylulose-5-phosphate synthase.